A 614-amino-acid chain; its full sequence is ATP-dependent RNA helicase dbp-3 (614 aa).

A disordered region spans residues 1–138 (MSSTKKHSRS…GTTTPAASTN (138 aa)). Residues 9–36 (RSEGEEKDARLAKKVKTDETPVDGEVKK) show a composition bias toward basic and acidic residues. 2 stretches are compositionally biased toward basic residues: residues 37–58 (ERKK…KSKK) and 91–109 (KKEK…KKAK). Residues 117-138 (EESTSASKATTNGTTTPAASTN) show a composition bias toward low complexity. A Q motif motif is present at residues 180-207 (MNFSQLPQSNLISKNPFAAYTNPTPIQS). The Helicase ATP-binding domain occupies 210–394 (WPFSLSGRDV…ESYMINPAQV (185 aa)). An ATP-binding site is contributed by 223–230 (AETGSGKT). The DEAD box signature appears at 340–343 (DEAD). The Helicase C-terminal domain maps to 435-584 (RLYELLKEAQ…PVPEELLKFG (150 aa)).

It belongs to the DEAD box helicase family. DDX5/DBP2 subfamily.

The protein resides in the nucleus. It localises to the nucleolus. It carries out the reaction ATP + H2O = ADP + phosphate + H(+). Its function is as follows. ATP-dependent RNA helicase required for 60S ribosomal subunit synthesis. Involved in efficient pre-rRNA processing, predominantly at site A3, which is necessary for the normal formation of 25S and 5.8S rRNAs. This is ATP-dependent RNA helicase dbp-3 (dbp-3) from Neurospora crassa (strain ATCC 24698 / 74-OR23-1A / CBS 708.71 / DSM 1257 / FGSC 987).